Reading from the N-terminus, the 798-residue chain is RNA cytosine-C(5)-methyltransferase NSUN2 (798 aa).

Over residues 1–13 the composition is skewed to basic residues; the sequence is MGRRNRRNRQRHQ. Residues 1-30 are disordered; it reads MGRRNRRNRQRHQRSTEQRSPAEEEQRRKA. A compositionally biased stretch (basic and acidic residues) spans 14 to 30; it reads RSTEQRSPAEEEQRRKA. S-adenosyl-L-methionine is bound by residues 186-192, Asp-217, Asp-244, and Asp-270; that span reads CAAPGSK. The Nucleophile role is filled by Cys-323. 2 disordered regions span residues 476 to 499 and 723 to 798; these read DEPAVDTENGETKPCTNQSDSSKT and KACD…ESVD. A compositionally biased stretch (basic and acidic residues) spans 723–747; sequence KACDEEHIDEKMDIDGAKEESKELS. Over residues 751–762 the composition is skewed to acidic residues; sequence SGDDEDPKEEDV. Positions 763–772 are enriched in basic and acidic residues; the sequence is IDRGVLEHVA.

Belongs to the class I-like SAM-binding methyltransferase superfamily. RsmB/NOP family. TRM4 subfamily.

The protein localises to the nucleus. It is found in the nucleolus. The protein resides in the cytoplasm. It localises to the mitochondrion. Its subcellular location is the cytoskeleton. The protein localises to the spindle. It is found in the secreted. The protein resides in the extracellular exosome. The enzyme catalyses cytidine(48) in tRNA + S-adenosyl-L-methionine = 5-methylcytidine(48) in tRNA + S-adenosyl-L-homocysteine + H(+). It catalyses the reaction cytidine(49) in tRNA + S-adenosyl-L-methionine = 5-methylcytidine(49) in tRNA + S-adenosyl-L-homocysteine + H(+). The catalysed reaction is cytidine(50) in tRNA + S-adenosyl-L-methionine = 5-methylcytidine(50) in tRNA + S-adenosyl-L-homocysteine + H(+). It carries out the reaction cytidine(34) in tRNA precursor + S-adenosyl-L-methionine = 5-methylcytidine(34) in tRNA precursor + S-adenosyl-L-homocysteine + H(+). The enzyme catalyses a cytidine in mRNA + S-adenosyl-L-methionine = a 5-methylcytidine in mRNA + S-adenosyl-L-homocysteine + H(+). RNA cytosine C(5)-methyltransferase that methylates cytosine to 5-methylcytosine (m5C) in various RNAs, such as tRNAs, mRNAs and some long non-coding RNAs (lncRNAs). Involved in various processes, such as epidermal stem cell differentiation, testis differentiation and maternal to zygotic transition during early development: acts by increasing protein synthesis; cytosine C(5)-methylation promoting tRNA stability and preventing mRNA decay. Methylates cytosine to 5-methylcytosine (m5C) at positions 34 and 48 of intron-containing tRNA(Leu)(CAA) precursors, and at positions 48, 49 and 50 of tRNA(Gly)(GCC) precursors. tRNA methylation is required generation of RNA fragments derived from tRNAs (tRFs). Also mediates C(5)-methylation of mitochondrial tRNAs. Catalyzes cytosine C(5)-methylation of mRNAs, leading to stabilize them and prevent mRNA decay. Cytosine C(5)-methylation of mRNAs also regulates mRNA export. Also mediates cytosine C(5)-methylation of non-coding RNAs, such as vault RNAs (vtRNAs), promoting their processing into regulatory small RNAs. Required for proper spindle assembly and chromosome segregation, independently of its methyltransferase activity. The sequence is that of RNA cytosine-C(5)-methyltransferase NSUN2 from Xenopus tropicalis (Western clawed frog).